A 412-amino-acid polypeptide reads, in one-letter code: [Pyruvate dehydrogenase (acetyl-transferring)] kinase isozyme 4, mitochondrial (412 aa).

The Histidine kinase domain maps to 138–368 (ILEYKDTCTV…DAIIYLKALS (231 aa)). ATP is bound by residues 254-261 (ELFKNAMR), D293, 312-313 (ST), and 329-334 (GFGYGL).

This sequence belongs to the PDK/BCKDK protein kinase family. As to quaternary structure, homodimer. Interacts with the pyruvate dehydrogenase complex subunit DLAT, and is part of the multimeric pyruvate dehydrogenase complex that contains multiple copies of pyruvate dehydrogenase (E1), dihydrolipoamide acetyltransferase (DLAT, E2) and lipoamide dehydrogenase (DLD, E3). As to expression, detected in skeletal muscle and heart.

The protein resides in the mitochondrion matrix. It carries out the reaction L-seryl-[pyruvate dehydrogenase E1 alpha subunit] + ATP = O-phospho-L-seryl-[pyruvate dehydrogenase E1 alpha subunit] + ADP + H(+). Functionally, kinase that plays a key role in regulation of glucose and fatty acid metabolism and homeostasis via phosphorylation of the pyruvate dehydrogenase subunits PDHA1 and PDHA2. This inhibits pyruvate dehydrogenase activity, and thereby regulates metabolite flux through the tricarboxylic acid cycle, down-regulates aerobic respiration and inhibits the formation of acetyl-coenzyme A from pyruvate. Inhibition of pyruvate dehydrogenase decreases glucose utilization and increases fat metabolism in response to prolonged fasting and starvation. Plays an important role in maintaining normal blood glucose levels under starvation, and is involved in the insulin signaling cascade. Via its regulation of pyruvate dehydrogenase activity, plays an important role in maintaining normal blood pH and in preventing the accumulation of ketone bodies under starvation. In the fed state, mediates cellular responses to glucose levels and to a high-fat diet. Regulates both fatty acid oxidation and de novo fatty acid biosynthesis. Plays a role in the generation of reactive oxygen species. Protects detached epithelial cells against anoikis. Plays a role in cell proliferation via its role in regulating carbohydrate and fatty acid metabolism. The protein is [Pyruvate dehydrogenase (acetyl-transferring)] kinase isozyme 4, mitochondrial (PDK4) of Ictidomys tridecemlineatus (Thirteen-lined ground squirrel).